The sequence spans 189 residues: UPF0301 protein PSPA7_0505 (189 aa).

Belongs to the UPF0301 (AlgH) family.

The chain is UPF0301 protein PSPA7_0505 from Pseudomonas paraeruginosa (strain DSM 24068 / PA7) (Pseudomonas aeruginosa (strain PA7)).